Consider the following 338-residue polypeptide: Glyceraldehyde-3-phosphate dehydrogenase (338 aa).

Residues 13-14, aspartate 35, and arginine 80 each bind NAD(+); that span reads RI. D-glyceraldehyde 3-phosphate-binding positions include 151 to 153, threonine 182, 211 to 212, and arginine 234; these read SCT and TG. The Nucleophile role is filled by cysteine 152. NAD(+) is bound at residue asparagine 317.

This sequence belongs to the glyceraldehyde-3-phosphate dehydrogenase family. As to quaternary structure, homotetramer.

The protein localises to the cytoplasm. The catalysed reaction is D-glyceraldehyde 3-phosphate + phosphate + NAD(+) = (2R)-3-phospho-glyceroyl phosphate + NADH + H(+). It participates in carbohydrate degradation; glycolysis; pyruvate from D-glyceraldehyde 3-phosphate: step 1/5. The polypeptide is Glyceraldehyde-3-phosphate dehydrogenase (gpdA) (Aspergillus oryzae (strain ATCC 42149 / RIB 40) (Yellow koji mold)).